The primary structure comprises 178 residues: Cytochrome b6-f complex iron-sulfur subunit 2 (178 aa).

A helical membrane pass occupies residues 17–36 (LLNFFTGAIVAATASAAIYP). A Rieske domain is found at 61-161 (GHPIPASQIL…VQVKDDYIWI (101 aa)). Cys-107, His-109, Cys-125, and His-128 together coordinate [2Fe-2S] cluster. A disulfide bridge connects residues Cys-112 and Cys-127.

This sequence belongs to the Rieske iron-sulfur protein family. The 4 large subunits of the cytochrome b6-f complex are cytochrome b6, subunit IV (17 kDa polypeptide, PetD), cytochrome f and the Rieske protein, while the 4 small subunits are PetG, PetL, PetM and PetN. The complex functions as a dimer. [2Fe-2S] cluster is required as a cofactor.

It is found in the cellular thylakoid membrane. The enzyme catalyses 2 oxidized [plastocyanin] + a plastoquinol + 2 H(+)(in) = 2 reduced [plastocyanin] + a plastoquinone + 4 H(+)(out). Functionally, component of the cytochrome b6-f complex, which mediates electron transfer between photosystem II (PSII) and photosystem I (PSI), cyclic electron flow around PSI, and state transitions. The sequence is that of Cytochrome b6-f complex iron-sulfur subunit 2 from Trichormus variabilis (strain ATCC 29413 / PCC 7937) (Anabaena variabilis).